A 205-amino-acid polypeptide reads, in one-letter code: ATP phosphoribosyltransferase (205 aa).

Belongs to the ATP phosphoribosyltransferase family. Short subfamily. As to quaternary structure, heteromultimer composed of HisG and HisZ subunits.

The protein localises to the cytoplasm. The enzyme catalyses 1-(5-phospho-beta-D-ribosyl)-ATP + diphosphate = 5-phospho-alpha-D-ribose 1-diphosphate + ATP. The protein operates within amino-acid biosynthesis; L-histidine biosynthesis; L-histidine from 5-phospho-alpha-D-ribose 1-diphosphate: step 1/9. Its function is as follows. Catalyzes the condensation of ATP and 5-phosphoribose 1-diphosphate to form N'-(5'-phosphoribosyl)-ATP (PR-ATP). Has a crucial role in the pathway because the rate of histidine biosynthesis seems to be controlled primarily by regulation of HisG enzymatic activity. This Leptospira interrogans serogroup Icterohaemorrhagiae serovar Lai (strain 56601) protein is ATP phosphoribosyltransferase.